We begin with the raw amino-acid sequence, 151 residues long: MFRGATAVNLDSKGRVAIPTRYRAEILEKNQGQMVCTVDIRQSCLLLYPLDEWEKIEQKLLALSNFDPTQRRLQRVMLGHATECEMDAQGRILLSGPLRQHAKLEKGLMLVGQLNKFEIWSDVEWHTQIAEDIEIGSSTDFAADALNDFSL.

2 SpoVT-AbrB domains span residues 5–52 and 81–124; these read ATAV…PLDE and ATEC…SDVE.

This sequence belongs to the MraZ family. Forms oligomers.

It localises to the cytoplasm. Its subcellular location is the nucleoid. The protein is Transcriptional regulator MraZ of Haemophilus influenzae (strain 86-028NP).